Here is a 61-residue protein sequence, read N- to C-terminus: Metallothionein-1B (61 aa).

The interval 1–29 is beta; it reads MDPNCSCVAGESCTCAGSCKCKQCRCASC. 20 residues coordinate a divalent metal cation: C5, C7, C13, C15, C19, C21, C24, C26, C29, C33, C34, C36, C37, C41, C44, C48, C50, C57, C59, and C60. The interval 30–61 is alpha; it reads KKSCCSCCPVGCAKCAQGCVCKGASDKCSCCA.

This sequence belongs to the metallothionein superfamily. Type 1 family.

Its function is as follows. Metallothioneins have a high content of cysteine residues that bind various heavy metals; these proteins are transcriptionally regulated by both heavy metals and glucocorticoids. The polypeptide is Metallothionein-1B (Equus caballus (Horse)).